The primary structure comprises 274 residues: Large ribosomal subunit protein bL28m (274 aa).

The disordered stretch occupies residues 249–274 (SETEEFGLGQEEDLFMKEEPKPTKMA). The segment covering 262 to 274 (LFMKEEPKPTKMA) has biased composition (basic and acidic residues).

Belongs to the bacterial ribosomal protein bL28 family. Component of the mitochondrial large ribosomal subunit (mt-LSU). Mature N.crassa 74S mitochondrial ribosomes consist of a small (37S) and a large (54S) subunit. The 37S small subunit contains a 16S ribosomal RNA (16S mt-rRNA) and 32 different proteins. The 54S large subunit contains a 23S rRNA (23S mt-rRNA) and 42 different proteins.

It is found in the mitochondrion. Functionally, component of the mitochondrial ribosome (mitoribosome), a dedicated translation machinery responsible for the synthesis of mitochondrial genome-encoded proteins, including at least some of the essential transmembrane subunits of the mitochondrial respiratory chain. The mitoribosomes are attached to the mitochondrial inner membrane and translation products are cotranslationally integrated into the membrane. In Neurospora crassa (strain ATCC 24698 / 74-OR23-1A / CBS 708.71 / DSM 1257 / FGSC 987), this protein is Large ribosomal subunit protein bL28m (mrpl24).